We begin with the raw amino-acid sequence, 239 residues long: MLVIPAIDLQSGRCVRLKQGRFDQVTQFSVFPIERALHFAKLGAKRLHVVDLDGARSGKMQQLELICSMQKTGIPIQAGGGIRSIEQALECSSAGISQLVIGSLAITNTDLTIQIIEKIKPENIVLALDVRVDTKVPLLAINGWQNNSTSSLWEVVSYYENYGIKNILCTDIACDGMMNGPNFDLYQQAVEYFPQIAWQASGGIRHMQDITTLGSLGISAVILGLMLYQDNVSFEELLC.

Asp8 functions as the Proton acceptor in the catalytic mechanism. Catalysis depends on Asp129, which acts as the Proton donor.

It belongs to the HisA/HisF family.

Its subcellular location is the cytoplasm. It catalyses the reaction 1-(5-phospho-beta-D-ribosyl)-5-[(5-phospho-beta-D-ribosylamino)methylideneamino]imidazole-4-carboxamide = 5-[(5-phospho-1-deoxy-D-ribulos-1-ylimino)methylamino]-1-(5-phospho-beta-D-ribosyl)imidazole-4-carboxamide. It participates in amino-acid biosynthesis; L-histidine biosynthesis; L-histidine from 5-phospho-alpha-D-ribose 1-diphosphate: step 4/9. This Legionella pneumophila (strain Corby) protein is 1-(5-phosphoribosyl)-5-[(5-phosphoribosylamino)methylideneamino] imidazole-4-carboxamide isomerase.